The following is a 965-amino-acid chain: Klaroid protein (965 aa).

A disordered region spans residues 1–20 (MSENTYQIETRRRSRSKTPF). A run of 2 helical transmembrane segments spans residues 303–323 (TIGGGLASLLRYLYVFIGSVL) and 343–363 (FLIFLLILLPLLLLSGWLLLQ). Residues 585–612 (SSDAEVQIERLNREIAFIKLALSDKQAE) adopt a coiled-coil conformation. Residues 801 to 963 (GGQILSTRCT…YRFRVHGKPP (163 aa)) form the SUN domain.

In terms of assembly, core component of the LINC complex which is composed of inner nuclear membrane SUN domain-containing proteins coupled to outer nuclear membrane KASH domain-containing nesprins. As to expression, expressed in all cells in the eye disk.

The protein resides in the membrane. Its subcellular location is the cytoplasm. The protein localises to the cytoskeleton. It localises to the microtubule organizing center. It is found in the perinuclear region. Its function is as follows. Component of the LINC (LInker of Nucleoskeleton and Cytoskeleton) complex involved in the connection between the nuclear lamina and the cytoskeleton. Is required to nuclear migration in eye and to anchor klar in the nuclear membrane. The protein is Klaroid protein of Drosophila melanogaster (Fruit fly).